A 399-amino-acid polypeptide reads, in one-letter code: S-adenosylmethionine synthase (399 aa).

Residue His-17 participates in ATP binding. Residue Asp-19 coordinates Mg(2+). Residue Glu-45 participates in K(+) binding. Positions 58 and 101 each coordinate L-methionine. Residues 101 to 111 are flexible loop; sequence QSADIAMGVDQ. ATP is bound by residues 177 to 179, 244 to 245, Asp-253, 259 to 260, Ala-276, and Lys-280; these read DGK, RF, and RK. Asp-253 is a binding site for L-methionine. Lys-284 contributes to the L-methionine binding site.

It belongs to the AdoMet synthase family. Homotetramer; dimer of dimers. Mg(2+) serves as cofactor. K(+) is required as a cofactor.

The protein resides in the cytoplasm. It catalyses the reaction L-methionine + ATP + H2O = S-adenosyl-L-methionine + phosphate + diphosphate. The protein operates within amino-acid biosynthesis; S-adenosyl-L-methionine biosynthesis; S-adenosyl-L-methionine from L-methionine: step 1/1. Functionally, catalyzes the formation of S-adenosylmethionine (AdoMet) from methionine and ATP. The overall synthetic reaction is composed of two sequential steps, AdoMet formation and the subsequent tripolyphosphate hydrolysis which occurs prior to release of AdoMet from the enzyme. The chain is S-adenosylmethionine synthase from Bacillus cereus (strain B4264).